A 509-amino-acid chain; its full sequence is Photosystem II CP47 reaction center protein (509 aa).

6 helical membrane passes run 21–36 (AVHL…WAGS), 101–115 (IVLS…IWHW), 140–156 (GIHL…FGAF), 203–218 (IAAG…FHLT), 237–252 (VLSS…AFVT), and 457–472 (NFAL…HGSR).

This sequence belongs to the PsbB/PsbC family. PsbB subfamily. In terms of assembly, PSII is composed of 1 copy each of membrane proteins PsbA, PsbB, PsbC, PsbD, PsbE, PsbF, PsbH, PsbI, PsbJ, PsbK, PsbL, PsbM, PsbT, PsbX, PsbY, PsbZ, Psb30/Ycf12, at least 3 peripheral proteins of the oxygen-evolving complex and a large number of cofactors. It forms dimeric complexes. Binds multiple chlorophylls. PSII binds additional chlorophylls, carotenoids and specific lipids. serves as cofactor.

The protein resides in the plastid. It localises to the chloroplast thylakoid membrane. Its function is as follows. One of the components of the core complex of photosystem II (PSII). It binds chlorophyll and helps catalyze the primary light-induced photochemical processes of PSII. PSII is a light-driven water:plastoquinone oxidoreductase, using light energy to abstract electrons from H(2)O, generating O(2) and a proton gradient subsequently used for ATP formation. The chain is Photosystem II CP47 reaction center protein from Pyropia yezoensis (Susabi-nori).